Reading from the N-terminus, the 462-residue chain is MIVTRFAPSPTGYLHIGGLRTALFNWLWARKNGGKFILRIEDTDLARNSEEATKAILEAFDWVGLDYDGDVAYQSKRFDIYKRYIQKLLDEGKAYYCYMSKEELDRLREEQMKRGERPRYDRRYRDFTGTPPQGVQPVVRIKAPLEGDIVFEDGIKGIVTIKAEELDDFIIARSDGTPTYNFVVAIDDALMGVTDVIRGDDHLYNTPKQIIVYEALGLPIPRFYHVPMILNEQGKKLSKRDGAMDVMEYKKMGYLPEALLNFLVRLGWSHGDQEIFSLQEMKELFDPKDINKSASAYNLSKLQWLNAHYIKNTPNEKLVKLLEEFGLFLSDHDKKEILLDALKERAKTLQELADMAKEILEAPKNYDEKGVKKALKGEWKAILELFLQKLKASDAHLPSDFHAIIEAVVEEKEIGFGKIGQPLRLALLGKMAGPDLSDVMAIIGKEETIARVEKLIKEKGNS.

Positions Pro-8–Gly-18 match the 'HIGH' region motif. The short motif at Lys-236–Arg-240 is the 'KMSKS' region element. Position 239 (Lys-239) interacts with ATP.

The protein belongs to the class-I aminoacyl-tRNA synthetase family. Glutamate--tRNA ligase type 1 subfamily. In terms of assembly, monomer.

It localises to the cytoplasm. It carries out the reaction tRNA(Glu) + L-glutamate + ATP = L-glutamyl-tRNA(Glu) + AMP + diphosphate. Its function is as follows. Catalyzes the attachment of glutamate to tRNA(Glu) in a two-step reaction: glutamate is first activated by ATP to form Glu-AMP and then transferred to the acceptor end of tRNA(Glu). The sequence is that of Glutamate--tRNA ligase 2 from Nitratiruptor sp. (strain SB155-2).